The following is a 624-amino-acid chain: Chaperone protein HtpG (624 aa).

The interval 1–336 (MKGQETRGFQ…SSDLPLNVSR (336 aa)) is a; substrate-binding. The interval 337-552 (EILQDSTVTR…ADEMSTQMAK (216 aa)) is b. Residues 553 to 624 (LFAAAGQKVP…IRRMNQLLVS (72 aa)) are c.

The protein belongs to the heat shock protein 90 family. Homodimer.

Its subcellular location is the cytoplasm. Its function is as follows. Molecular chaperone. Has ATPase activity. The protein is Chaperone protein HtpG of Escherichia coli O1:K1 / APEC.